The primary structure comprises 554 residues: Malate synthase 1 (554 aa).

Arg177 serves as the catalytic Proton acceptor. The active-site Proton donor is Asp457. An SKL peroxisome targeting motif motif is present at residues 552-554 (SKL).

This sequence belongs to the malate synthase family. In terms of assembly, interacts with PEX9.

The protein localises to the peroxisome matrix. The enzyme catalyses glyoxylate + acetyl-CoA + H2O = (S)-malate + CoA + H(+). The protein operates within carbohydrate metabolism; glyoxylate cycle; (S)-malate from isocitrate: step 2/2. In terms of biological role, malate synthase which takes part in the glyoxylate cycle. MLS1 activity is essential for cells to grow on oleic acid as a sole carbon source. Two steps of the glyoxylate cycle take place in the cytosol, the splitting of isocitrate into succinate and glyoxylate, and the dehydrogenation of malate to oxaloacetate. However, the formation of malate from glyoxylate and acetyl-CoA undertaken MLS1, occurs in the peroxisomes when cells are grown on oleic acid. The source of acetyl-CoA being either peroxisomal when breaking down fatty acids, or cytosolic when extra-cellular two-carbon substrates are used, therefore, although not strictly essential, the peroxisomal localization of MLS1 appears to be advantageous for cells growing on oleic acid, in that acetyl-CoA production and utilization are thereby intimately compartmentalized together to increase efficiency. The sequence is that of Malate synthase 1 from Saccharomyces cerevisiae (strain YJM789) (Baker's yeast).